The primary structure comprises 514 residues: MDVIKKKHWWQSDQLKWSVIGLLGLLVGYLVVLMYVQGEYLFAIMTLILSSAGLYIFANRKTYAWRYVYPGLAGMGLFVLFPLVCTIAIAFTNYSSTNQLTFERAQQVLMDRSYQAGKTYNFGLYPAGDEWQLALTDGETGKHYLSGAFSFGGEQKLQLKETDALPGGERANLRIITQNRLALNQITAVLPDESKVVMSSLRQFSGTRPLYTLADDGLLTNNQSGVKYRPNNDSGYYQSINADGSWGDEKLSPGYTVTIGAKNFTRVFTDEGIQKPFFAIFVWTVVFSVLTVVLTVAVGMVLACLVQWEALKGKAIYRVLLILPYAVPSFISILIFKGLFNQSFGEINMMLSALFGIKPAWFSDPNTARAMVIIVNTWLGYPYMMILCMGLLKAIPDDLYEASAMDGAGPFQNFFKITLPLLIKPLTPLMIASFAFNFNNFVLIQLLTNGGPDRLGTTTPAGYTDLLVSYTYRIAFEGGGGQDFGLAAAIATLIFLLVGALAIVNLKATRMKFD.

Residues 1–16 (MDVIKKKHWWQSDQLK) lie on the Cytoplasmic side of the membrane. Residues 17–36 (WSVIGLLGLLVGYLVVLMYV) traverse the membrane as a helical segment. Residues 37 to 39 (QGE) are Periplasmic-facing. A helical membrane pass occupies residues 40–57 (YLFAIMTLILSSAGLYIF). Over 58–69 (ANRKTYAWRYVY) the chain is Cytoplasmic. The helical transmembrane segment at 70–92 (PGLAGMGLFVLFPLVCTIAIAFT) threads the bilayer. Residues 93-283 (NYSSTNQLTF…QKPFFAIFVW (191 aa)) are Periplasmic-facing. Positions 281–505 (FVWTVVFSVL…LLVGALAIVN (225 aa)) constitute an ABC transmembrane type-1 domain. Residues 284–306 (TVVFSVLTVVLTVAVGMVLACLV) traverse the membrane as a helical segment. Topologically, residues 307–318 (QWEALKGKAIYR) are cytoplasmic. Residues 319 to 341 (VLLILPYAVPSFISILIFKGLFN) form a helical membrane-spanning segment. At 342–369 (QSFGEINMMLSALFGIKPAWFSDPNTAR) the chain is on the periplasmic side. The helical transmembrane segment at 370 to 392 (AMVIIVNTWLGYPYMMILCMGLL) threads the bilayer. Topologically, residues 393-412 (KAIPDDLYEASAMDGAGPFQ) are cytoplasmic. A helical membrane pass occupies residues 413–435 (NFFKITLPLLIKPLTPLMIASFA). Over 436 to 483 (FNFNNFVLIQLLTNGGPDRLGTTTPAGYTDLLVSYTYRIAFEGGGGQD) the chain is Periplasmic. The chain crosses the membrane as a helical span at residues 484–506 (FGLAAAIATLIFLLVGALAIVNL). At 507–514 (KATRMKFD) the chain is on the cytoplasmic side.

It belongs to the binding-protein-dependent transport system permease family. MalFG subfamily. As to quaternary structure, the complex is composed of two ATP-binding proteins (MalK), two transmembrane proteins (MalG and MalF) and a solute-binding protein (MalE).

The protein resides in the cell inner membrane. Its function is as follows. Part of the ABC transporter complex MalEFGK involved in maltose/maltodextrin import. Probably responsible for the translocation of the substrate across the membrane. In Salmonella typhi, this protein is Maltose/maltodextrin transport system permease protein MalF (malF).